An 88-amino-acid chain; its full sequence is ATP synthase epsilon chain (88 aa).

This sequence belongs to the ATPase epsilon chain family. F-type ATPases have 2 components, CF(1) - the catalytic core - and CF(0) - the membrane proton channel. CF(1) has five subunits: alpha(3), beta(3), gamma(1), delta(1), epsilon(1). CF(0) has three main subunits: a, b and c.

The protein resides in the cell inner membrane. Functionally, produces ATP from ADP in the presence of a proton gradient across the membrane. This is ATP synthase epsilon chain (atpC) from Chlorobaculum tepidum (strain ATCC 49652 / DSM 12025 / NBRC 103806 / TLS) (Chlorobium tepidum).